A 202-amino-acid chain; its full sequence is Protein G1-like4 (202 aa).

2 disordered regions span residues 1–44 and 158–202; these read MDLS…RYEA and RARG…GAAC. The span at 12-22 shows a compositional bias: gly residues; that stretch reads SGGGNGGGGGS. Over residues 23-36 the composition is skewed to low complexity; the sequence is SSSNSSPSMGAGAP. Positions 41–168 constitute an ALOG domain; the sequence is RYEAQKRRDW…ARGVSYEKKK (128 aa). A Nuclear localization signal motif is present at residues 166-170; the sequence is KKKRK. Low complexity predominate over residues 173–186; the sequence is QQQQLQGGDSSGLH. Residues 192–202 are compositionally biased toward pro residues; the sequence is PPPPPPAGAAC.

This sequence belongs to the plant homeotic and developmental regulators ALOG protein family.

It localises to the nucleus. Its function is as follows. Probable transcription regulator that acts as a developmental regulator by promoting cell growth in response to light. This Oryza sativa subsp. indica (Rice) protein is Protein G1-like4.